The chain runs to 345 residues: Gibberellin 2-beta-dioxygenase 2 (345 aa).

The Fe2OG dioxygenase domain occupies 170 to 285 (HSDSLLRINH…RMSMMYFAAP (116 aa)). The Fe cation site is built by H209, D211, and H266. Residue R276 is part of the active site.

This sequence belongs to the iron/ascorbate-dependent oxidoreductase family. GA2OX subfamily. Fe cation is required as a cofactor. As to expression, predominantly expressed in leaves.

The catalysed reaction is gibberellin A1 + 2-oxoglutarate + O2 = gibberellin A8 + succinate + CO2. The protein operates within plant hormone biosynthesis; gibberellin biosynthesis. Catalyzes the 2-beta-hydroxylation of several biologically active gibberellins, leading to the homeostatic regulation of their endogenous level. Catabolism of gibberellins (GAs) plays a central role in plant development. Converts GA9/GA20 to GA51/GA29 and GA4/GA1 to GA34/GA8. In Pisum sativum (Garden pea), this protein is Gibberellin 2-beta-dioxygenase 2 (GA2OX2).